A 685-amino-acid polypeptide reads, in one-letter code: Polyphosphate kinase (685 aa).

N45 provides a ligand contact to ATP. The Mg(2+) site is built by R372 and R402. Positions 427–461 (PGLKIHAKLFLISRKEGDDVVRYAHIGTGNFNEKT) constitute a PLD phosphodiesterase 1 domain. The Phosphohistidine intermediate role is filled by H432. Residues Y465, R561, and H589 each coordinate ATP. A PLD phosphodiesterase 2 domain is found at 584–614 (DRYLEHDRIYIFDNAGDKQVYLSSADWMTRN).

Belongs to the polyphosphate kinase 1 (PPK1) family. Mg(2+) serves as cofactor. An intermediate of this reaction is the autophosphorylated ppk in which a phosphate is covalently linked to a histidine residue through a N-P bond.

It catalyses the reaction [phosphate](n) + ATP = [phosphate](n+1) + ADP. Catalyzes the reversible transfer of the terminal phosphate of ATP to form a long-chain polyphosphate (polyP). This chain is Polyphosphate kinase, found in Klebsiella pneumoniae.